A 145-amino-acid polypeptide reads, in one-letter code: Bacilliredoxin GK1781 (145 aa).

It belongs to the bacilliredoxin family.

The chain is Bacilliredoxin GK1781 from Geobacillus kaustophilus (strain HTA426).